Here is a 101-residue protein sequence, read N- to C-terminus: Small ribosomal subunit protein uS14 (101 aa).

A compositionally biased stretch (basic and acidic residues) spans 1–10; it reads MAKKSSIEKN. A disordered region spans residues 1–23; the sequence is MAKKSSIEKNNRRKRMTGNAAAK.

This sequence belongs to the universal ribosomal protein uS14 family. In terms of assembly, part of the 30S ribosomal subunit. Contacts proteins S3 and S10.

Its function is as follows. Binds 16S rRNA, required for the assembly of 30S particles and may also be responsible for determining the conformation of the 16S rRNA at the A site. The sequence is that of Small ribosomal subunit protein uS14 from Nitrobacter hamburgensis (strain DSM 10229 / NCIMB 13809 / X14).